Here is a 278-residue protein sequence, read N- to C-terminus: Small ribosomal subunit protein uS2 (278 aa).

Residues 235–278 (QRRKDHGEGGQQAAGGGRGQRDEINVYQGGRGGRGGGPRQQQAS) form a disordered region. Composition is skewed to gly residues over residues 243–252 (GGQQAAGGGR) and 263–272 (GGRGGRGGGP).

The protein belongs to the universal ribosomal protein uS2 family.

In Sorangium cellulosum (strain So ce56) (Polyangium cellulosum (strain So ce56)), this protein is Small ribosomal subunit protein uS2.